Reading from the N-terminus, the 362-residue chain is H-2 class I histocompatibility antigen, L-D alpha chain (362 aa).

Positions 1-24 (MGAMAPRTLLLLLAAALAPTQTRA) are cleaved as a signal peptide. The segment at 25–114 (GPHSMRYFET…LLGYYNQSAG (90 aa)) is alpha-1. Topologically, residues 25 to 309 (GPHSMRYFET…PPPSTDSYMV (285 aa)) are extracellular. Asn-110 carries N-linked (GlcNAc...) asparagine glycosylation. The alpha-2 stretch occupies residues 115-206 (GTHTLQWMYG…KNGNATLLRT (92 aa)). Cys-125 and Cys-188 are disulfide-bonded. Residues Asn-200 and Asn-280 are each glycosylated (N-linked (GlcNAc...) asparagine). The segment at 207-298 (DSPKAHVTHH…GLPEPLTLRW (92 aa)) is alpha-3. The Ig-like C1-type domain occupies 209–297 (PKAHVTHHPR…EGLPEPLTLR (89 aa)). Residues Cys-227 and Cys-283 are joined by a disulfide bond. A connecting peptide region spans residues 299–309 (EPPPSTDSYMV). A helical membrane pass occupies residues 310 to 331 (IVAVLGVLGAMAIIGAVVAFVM). At 332 to 362 (KRRRNTGGKGGDYALAPGSQSSEMSLRDCKA) the chain is on the cytoplasmic side. Positions 340-362 (KGGDYALAPGSQSSEMSLRDCKA) are disordered. 2 positions are modified to phosphoserine: Ser-353 and Ser-356.

Belongs to the MHC class I family. In terms of assembly, heterodimer of an alpha chain and a beta chain (beta-2-microglobulin).

It localises to the membrane. Involved in the presentation of foreign antigens to the immune system. The polypeptide is H-2 class I histocompatibility antigen, L-D alpha chain (H2-L) (Mus musculus (Mouse)).